The primary structure comprises 199 residues: Recombination protein RecR (199 aa).

A C4-type zinc finger spans residues 56–71 (CTVCFNVTEQETCNIC). In terms of domain architecture, Toprim spans 79–174 (SVICVVEESK…TVTRLASGLP (96 aa)).

It belongs to the RecR family.

Functionally, may play a role in DNA repair. It seems to be involved in an RecBC-independent recombinational process of DNA repair. It may act with RecF and RecO. The chain is Recombination protein RecR from Paenarthrobacter aurescens (strain TC1).